The sequence spans 309 residues: D-alanine--D-alanine ligase (309 aa).

The region spanning 104-306 is the ATP-grasp domain; it reads KLLWQSFNLP…YQILVQKILE (203 aa). 137-192 contacts ATP; that stretch reads ISLLGLPIIVKPNQEGSSIGITIVYSYETLYKACKTAFIFDNSILIEKFIYGEEYT. Mg(2+)-binding residues include D260, E273, and N275.

Belongs to the D-alanine--D-alanine ligase family. It depends on Mg(2+) as a cofactor. The cofactor is Mn(2+).

It localises to the cytoplasm. It carries out the reaction 2 D-alanine + ATP = D-alanyl-D-alanine + ADP + phosphate + H(+). It functions in the pathway cell wall biogenesis; peptidoglycan biosynthesis. Cell wall formation. The protein is D-alanine--D-alanine ligase of Buchnera aphidicola subsp. Baizongia pistaciae (strain Bp).